Here is a 309-residue protein sequence, read N- to C-terminus: 2-phospho-L-lactate transferase (309 aa).

7,8-didemethyl-8-hydroxy-5-deazariboflavin contacts are provided by Asp50 and Lys89.

It belongs to the CofD family. Homodimer. It depends on Mg(2+) as a cofactor.

It carries out the reaction (2S)-lactyl-2-diphospho-5'-guanosine + 7,8-didemethyl-8-hydroxy-5-deazariboflavin = oxidized coenzyme F420-0 + GMP + H(+). The protein operates within cofactor biosynthesis; coenzyme F420 biosynthesis. Functionally, catalyzes the transfer of the 2-phospholactate moiety from (2S)-lactyl-2-diphospho-5'-guanosine to 7,8-didemethyl-8-hydroxy-5-deazariboflavin (FO) with the formation of oxidized coenzyme F420-0 and GMP. In Methanococcus maripaludis (strain C5 / ATCC BAA-1333), this protein is 2-phospho-L-lactate transferase.